A 273-amino-acid polypeptide reads, in one-letter code: Imidazole glycerol phosphate synthase subunit HisF (273 aa).

Residues Asp-11 and Asp-134 contribute to the active site.

It belongs to the HisA/HisF family. As to quaternary structure, heterodimer of HisH and HisF.

The protein resides in the cytoplasm. It carries out the reaction 5-[(5-phospho-1-deoxy-D-ribulos-1-ylimino)methylamino]-1-(5-phospho-beta-D-ribosyl)imidazole-4-carboxamide + L-glutamine = D-erythro-1-(imidazol-4-yl)glycerol 3-phosphate + 5-amino-1-(5-phospho-beta-D-ribosyl)imidazole-4-carboxamide + L-glutamate + H(+). It functions in the pathway amino-acid biosynthesis; L-histidine biosynthesis; L-histidine from 5-phospho-alpha-D-ribose 1-diphosphate: step 5/9. IGPS catalyzes the conversion of PRFAR and glutamine to IGP, AICAR and glutamate. The HisF subunit catalyzes the cyclization activity that produces IGP and AICAR from PRFAR using the ammonia provided by the HisH subunit. The sequence is that of Imidazole glycerol phosphate synthase subunit HisF from Methanococcoides burtonii (strain DSM 6242 / NBRC 107633 / OCM 468 / ACE-M).